The following is a 460-amino-acid chain: tRNA(Ile)-lysidine synthase (460 aa).

Residue 30-35 (SGGLDS) coordinates ATP.

This sequence belongs to the tRNA(Ile)-lysidine synthase family.

Its subcellular location is the cytoplasm. It catalyses the reaction cytidine(34) in tRNA(Ile2) + L-lysine + ATP = lysidine(34) in tRNA(Ile2) + AMP + diphosphate + H(+). In terms of biological role, ligates lysine onto the cytidine present at position 34 of the AUA codon-specific tRNA(Ile) that contains the anticodon CAU, in an ATP-dependent manner. Cytidine is converted to lysidine, thus changing the amino acid specificity of the tRNA from methionine to isoleucine. This is tRNA(Ile)-lysidine synthase from Yersinia pseudotuberculosis serotype I (strain IP32953).